A 271-amino-acid polypeptide reads, in one-letter code: Extracellular metalloprotease TRV_06892 (271 aa).

The first 19 residues, 1-19 (MRFSVLLTGLAAAGSIATA), serve as a signal peptide directing secretion. Residue Asn136 is glycosylated (N-linked (GlcNAc...) asparagine). His185 serves as a coordination point for Zn(2+). Residue Glu186 is part of the active site. Position 189 (His189) interacts with Zn(2+). N-linked (GlcNAc...) asparagine glycosylation occurs at Asn200. The cysteines at positions 222 and 248 are disulfide-linked.

Belongs to the peptidase M43B family.

It localises to the secreted. Functionally, secreted metalloproteinase that allows assimilation of proteinaceous substrates. Plays a pivotal role as a pathogenicity determinant during infections and contributes to the ability of the pathogen to persist within the mammalian host. This is Extracellular metalloprotease TRV_06892 from Trichophyton verrucosum (strain HKI 0517).